Reading from the N-terminus, the 293-residue chain is Delta(3,5)-Delta(2,4)-dienoyl-CoA isomerase, mitochondrial (293 aa).

Residues 84–88 and Gly-142 contribute to the substrate site; that span reads AGLNL.

Belongs to the enoyl-CoA hydratase/isomerase family.

It localises to the mitochondrion. It carries out the reaction (3E,5Z)-octadienoyl-CoA = (2E,4E)-octadienoyl-CoA. The enzyme catalyses (3E,5Z,8Z,11Z,14Z)-eicosapentaenoyl-CoA = (2E,4E,8Z,11Z,14Z)-eicosapentaenoyl-CoA. It participates in lipid metabolism; fatty acid beta-oxidation. In terms of biological role, isomerization of 3-trans,5-cis-dienoyl-CoA to 2-trans,4-trans-dienoyl-CoA. This chain is Delta(3,5)-Delta(2,4)-dienoyl-CoA isomerase, mitochondrial (ech1), found in Dictyostelium discoideum (Social amoeba).